Here is a 648-residue protein sequence, read N- to C-terminus: Sodium/nucleoside cotransporter 1 (648 aa).

Residues 1–80 lie on the Cytoplasmic side of the membrane; it reads MADNTQRQRE…ARSFCREHRQ (80 aa). A helical membrane pass occupies residues 81–104; it reads LFGWICKGLLSTACLGFLMVACLL. The Extracellular segment spans residues 105-109; the sequence is DLQRA. A helical membrane pass occupies residues 110–128; that stretch reads LALLIITCVVLVFLAYDLL. Residues 129–147 are Cytoplasmic-facing; that stretch reads KRLLGSKLRRCVKFQGHSC. The helical transmembrane segment at 148 to 167 threads the bilayer; that stretch reads LSLWLKRGLALAAGVGLILW. The Extracellular portion of the chain corresponds to 168-178; sequence LSLDTAQRPEQ. Residues 179–195 traverse the membrane as a helical segment; the sequence is LVSFAGICVFLVLLFAG. Residues 196–201 lie on the Cytoplasmic side of the membrane; the sequence is SKHHRA. A helical transmembrane segment spans residues 202-222; sequence VSWRAVSWGLGLQFVLGLFVI. The Extracellular segment spans residues 223 to 261; sequence RTEPGFIAFQWLGDQIQVFLSYTEAGSSFVFGEALVKDV. Residues 262 to 283 form a helical membrane-spanning segment; sequence FAFQVLPIIIFFSCVMSVLYYL. Over 284 to 294 the chain is Cytoplasmic; that stretch reads GLMQWVILKIA. Residues 295–318 form a helical membrane-spanning segment; that stretch reads WLMQVTMGTSATETLSVAGNIFVS. Over 319–337 the chain is Extracellular; sequence QTEAPLLIRPYLADMTLSE. Residues 338–360 form a helical membrane-spanning segment; the sequence is VHVVMTGGYATIAGSLLGAYISF. At 361-366 the chain is on the cytoplasmic side; the sequence is GIDAAS. A helical membrane pass occupies residues 367 to 386; it reads LIAASVMAAPCALALSKLVY. Over 387–423 the chain is Extracellular; it reads PEVEESKFRSENGVKLTYGDAQNLLEAASAGAAISVK. The chain crosses the membrane as a helical span at residues 424–446; it reads VVANIAANLIAFLAVLAFVNAAL. The Cytoplasmic portion of the chain corresponds to 447–457; it reads SWLGDMVDIQG. A helical membrane pass occupies residues 458–479; that stretch reads LSFQLICSYVLRPVAFLMGVAW. The Extracellular segment spans residues 480–534; it reads EDCPVVAELLGIKFFLNEFVAYQELSQYKQRRLAGAEEWLGDKKQWISVRAEILT. A helical membrane pass occupies residues 535-558; that stretch reads TYALCGFANFSSIGIMLGGLTSLV. Topologically, residues 559 to 569 are cytoplasmic; the sequence is PQRRSDFSQIV. A helical membrane pass occupies residues 570-592; that stretch reads LRALITGAFVSLLNACVAGILYV. The Extracellular segment spans residues 593 to 648; that stretch reads PRGVEVDCVSLLNQTVSSSSFEVYLCCRQVFQSTSSEFSQVALDNCCRFYNHTVCT. 2 N-linked (GlcNAc...) asparagine glycosylation sites follow: Asn605 and Asn643.

Belongs to the concentrative nucleoside transporter (CNT) (TC 2.A.41) family. Post-translationally, N-glycosylated. N-glycosylation is required for localization to the plasma membrane and the transporter activity. Expressed predominantly in the brush-border membranes of the polarized epithelial cells of jejunum and renal cortical tubules and in the bile canalicular membranes of liver parenchymal cells.

The protein localises to the cell membrane. Its subcellular location is the apical cell membrane. The catalysed reaction is uridine(out) + Na(+)(out) = uridine(in) + Na(+)(in). It catalyses the reaction thymidine(out) + Na(+)(out) = thymidine(in) + Na(+)(in). The enzyme catalyses cytidine(out) + Na(+)(out) = cytidine(in) + Na(+)(in). It carries out the reaction adenosine(out) + Na(+)(out) = adenosine(in) + Na(+)(in). Due to its high apparent affinity but slow transport, adenosine could act as a negative regulator of pyrimidine transport under some conditions. Sodium and pyrimidine nucleoside symporter of the plasma membrane that imports uridine, thymidine and cytidine into cells by coupling their transport to the transmembrane sodium electrochemical gradient. Also transports adenosine, an atypical substrate transported with high apparent affinity, but low maximum velocity. Therefore, exhibits the transport characteristics of the nucleoside transport system cit or N2 subtype (N2/cit). Involved in renal nucleoside (re)absorption. In Rattus norvegicus (Rat), this protein is Sodium/nucleoside cotransporter 1.